The following is a 159-amino-acid chain: UPF0336 protein ML1910 (159 aa).

Belongs to the UPF0336 family.

The chain is UPF0336 protein ML1910 from Mycobacterium leprae (strain TN).